The following is a 369-amino-acid chain: Protein V (369 aa).

Disordered stretches follow at residues 1–24 (MDQDALISKEDSEVEREASGGRES) and 38–320 (SEPT…GHRR). The segment covering 7-20 (ISKEDSEVEREASG) has biased composition (basic and acidic residues). The span at 50 to 61 (LHNTINTLQRPG) shows a compositional bias: polar residues. Basic and acidic residues-rich tracts occupy residues 99-110 (AEAHARNVDKQN) and 150-168 (GAEDENREMAANPDKRGED). Serine 249, serine 257, and serine 260 each carry phosphoserine; by host. Zn(2+)-binding residues include histidine 318, cysteine 337, cysteine 341, cysteine 353, cysteine 355, cysteine 358, cysteine 362, and cysteine 365.

This sequence belongs to the paramyxoviruses V protein family. In terms of assembly, interacts with host IFIH1/MDA5 and DHX58/LGP2. Interacts with host IRF3. Interacts with host RIGI regulatory protein (via CARDs domain) and host TRIM25 (via SPRY domain); these interactions prevent TRIM25-mediated ubiquitination of RIG-I and disrupts downstream RIG-I signaling.

Its subcellular location is the host cytoplasm. Functionally, plays an essential role in the inhibition of host immune response. Prevents the establishment of cellular antiviral state by blocking interferon-alpha/beta (IFN-alpha/beta) production and signaling pathway. Interacts with host IFIH1/MDA5 and DHX58/LGP2 to inhibit the transduction pathway involved in the activation of IFN-beta promoter, thus protecting the virus against cell antiviral state. Also interacts with and inhibits host IRF3. Blocks the type I interferon signaling pathway by disrupting the RIG-I signaling pathway. This Sendai virus (strain Hamamatsu) (SeV) protein is Protein V (P/V/C).